The following is an 870-amino-acid chain: Dynamin-2 (870 aa).

Residues 28-294 (HLDLPQIAVV…LTNHIRESLP (267 aa)) enclose the Dynamin-type G domain. The G1 motif stretch occupies residues 38-45 (GGQSAGKS). Residues serine 41, glycine 43, lysine 44, serine 45, serine 46, arginine 59, and glycine 60 each coordinate GDP. Residues 64 to 66 (VTR) are G2 motif. The tract at residues 136 to 139 (DLPG) is G3 motif. The tract at residues 205-208 (TKLD) is G4 motif. GDP is bound by residues lysine 206, aspartate 208, and aspartate 211. Tyrosine 231 bears the Phosphotyrosine; by SRC mark. Residues 235–238 (VNRS) are G5 motif. GDP is bound by residues asparagine 236, arginine 237, and glutamine 239. At lysine 299 the chain carries N6-acetyllysine. The region spanning 519–625 (LVIRRGWLTI…WKASFLRAGV (107 aa)) is the PH domain. Tyrosine 597 is modified (phosphotyrosine; by SRC). Lysine 598 is subject to N6-acetyllysine. The 92-residue stretch at 653–744 (VETIRNLVDS…IIGDISTSTV (92 aa)) folds into the GED domain. Residues 741–870 (TSTVSTPVPP…IRPAEPSLLD (130 aa)) form a disordered region. A Phosphothreonine modification is found at threonine 755. Over residues 756–767 (WLQSASSHSPTP) the composition is skewed to polar residues. Serine 764 bears the Phosphoserine; by CDK1 mark. Over residues 796–806 (VPVGAAASFSA) the composition is skewed to low complexity. The span at 826–855 (PAPPQIPSRPVRIPPGIPPGVPSRRPPAAP) shows a compositional bias: pro residues. At serine 848 the chain carries Phosphoserine; by GSK3-alpha.

The protein belongs to the TRAFAC class dynamin-like GTPase superfamily. Dynamin/Fzo/YdjA family. In terms of assembly, oligomerizes into a helical polymer that self-assembles around the vesicle membrane, when associated to the menbrane through lipid binding. Interacts with SHANK1 and SHANK2. Interacts with SNX9. Interacts (via C-terminal proline-rich domain (PRD)) with SNX18 (via SH3 domain); this interaction regulates ATG9A and ATG16L1 trafficking from recycling endosomes to sites of autophagosome formation. Interacts with SNX33 (via SH3 domain). Interacts with MYO1E (via SH3 domain). Interacts with PSTPIP1 (via SH3 domain). Interacts with CTNND2. Interacts (via C-terminal proline-rich domain (PRD)) with BIN1 (via SH3 domain); this interaction allows the recruitment of DNM2 to the membrane tubules and inhibits self-assembly-stimulated GTPase activity on the membrane. Interacts with GABARAP, GABARAPL1 and GABARAPL2. Interacts with MAP1LC3B (the lipidate and non-lipidated LC3 form); this interaction mediates recycling endosome scission leading to autophagosome release. Interacts with ITSN1. Interacts (via C-terminal proline-rich domain (PRD)) with SH3BP4 (via SH3 domain); this interaction controls the GTPase activity and is prevented by EGFR-induced tyrosine phosphorylation of either DNM2 or SH3BP4. May interact with PIK3C3. May be a component of a complex composed of RAB5A (in GDP-bound form), DYN2 and PIK3C3. Interacts with SDC4; this interaction is markedly enhanced at focal ahesion site upon induction of focal adhesions and stress-fiber formation. Interacts with ACTN1. Interacts with CTTN; this interaction stimulates the intrinsic GTPase activity of DNM2 and stabilizes the association of DNM2 and actin filaments; in addition this interaction is stimulated by ligand binding to the receptor, leading to the recruitment of the DNM2-CTTN complex to the sequestered receptor-ligand complex to its internalization. Interacts with NOSTRIN (via SH3 domain); this interaction allows the recruitment of NOS3 to dynamin-positive structures. Interacts with TUBG1; this interaction may participate in centrosome cohesion. In terms of processing, phosphorylation at Ser-848 by GSK3-alpha relieves the inhibition of BIN1 and promotes endocytosis. Phosphorylation at Ser-764 by CDK1 is greatly increased upon mitotic entry. It regulates cytokinesis downstream of calcineurin, and does not affect clathrin-mediated endocytosis. Dephosphorylated by calcineurin/PP2 during cytokinesis in a Ca(2+)- and calmodulin-dependent manner. Phosphorylated on tyrosine residues by EGFR and after activation of SRC. As to expression, widely expressed. Expressed in skeletal muscle and the peripheral nerve.

The protein localises to the cytoplasm. It is found in the cytoskeleton. The protein resides in the cytoplasmic vesicle. It localises to the clathrin-coated vesicle. Its subcellular location is the cell projection. The protein localises to the uropodium. It is found in the endosome. The protein resides in the microtubule organizing center. It localises to the centrosome. Its subcellular location is the centriole. The protein localises to the recycling endosome. It is found in the phagocytic cup. The protein resides in the phagosome membrane. It localises to the podosome. Its subcellular location is the cell junction. The protein localises to the postsynaptic density. It is found in the synapse. The protein resides in the synaptosome. It localises to the midbody. Its subcellular location is the membrane. The protein localises to the clathrin-coated pit. It catalyses the reaction GTP + H2O = GDP + phosphate + H(+). Catalyzes the hydrolysis of GTP and utilizes this energy to mediate vesicle scission at plasma membrane during endocytosis and filament remodeling at many actin structures during organization of the actin cytoskeleton. Plays an important role in vesicular trafficking processes, namely clathrin-mediated endocytosis (CME), exocytic and clathrin-coated vesicle from the trans-Golgi network, and PDGF stimulated macropinocytosis. During vesicular trafficking process, associates to the membrane, through lipid binding, and self-assembles into ring-like structure through oligomerization to form a helical polymer around the vesicle membrane and leading to vesicle scission. Plays a role in organization of the actin cytoskeleton by mediating arrangement of stress fibers and actin bundles in podocytes. During organization of the actin cytoskeleton, self-assembles into ring-like structure that directly bundles actin filaments to form typical membrane tubules decorated with dynamin spiral polymers. Self-assembly increases GTPase activity and the GTP hydrolysis causes the rapid depolymerization of dynamin spiral polymers, and results in dispersion of actin bundles. Remodels, through its interaction with CTTN, bundled actin filaments in a GTPase-dependent manner and plays a role in orchestrating the global actomyosin cytoskeleton. The interaction with CTTN stabilizes the interaction of DNM2 and actin filaments and stimulates the intrinsic GTPase activity that results in actin filament-barbed ends and increases the sensitivity of filaments in bundles to the actin depolymerizing factor, CFL1. Plays a role in the autophagy process, by participating in the formation of ATG9A vesicles destined for the autophagosomes through its interaction with SNX18, by mediating recycling endosome scission leading to autophagosome release through MAP1LC3B interaction. Also regulates maturation of apoptotic cell corpse-containing phagosomes by recruiting PIK3C3 to the phagosome membrane. Also plays a role in cytokinesis. May participate in centrosome cohesion through its interaction with TUBG1. Plays a role in the regulation of neuron morphology, axon growth and formation of neuronal growth cones. Involved in membrane tubulation. This Homo sapiens (Human) protein is Dynamin-2.